Consider the following 145-residue polypeptide: Large ribosomal subunit protein bL9 (145 aa).

The protein belongs to the bacterial ribosomal protein bL9 family.

In terms of biological role, binds to the 23S rRNA. The polypeptide is Large ribosomal subunit protein bL9 (Ureaplasma urealyticum serovar 10 (strain ATCC 33699 / Western)).